Consider the following 212-residue polypeptide: Ribonuclease HII (212 aa).

The region spanning glycine 18–arginine 212 is the RNase H type-2 domain. Positions 24, 25, and 118 each coordinate a divalent metal cation.

Belongs to the RNase HII family. Mn(2+) is required as a cofactor. The cofactor is Mg(2+).

Its subcellular location is the cytoplasm. The catalysed reaction is Endonucleolytic cleavage to 5'-phosphomonoester.. Functionally, endonuclease that specifically degrades the RNA of RNA-DNA hybrids. In Erythrobacter litoralis (strain HTCC2594), this protein is Ribonuclease HII.